We begin with the raw amino-acid sequence, 541 residues long: Chaperonin GroEL 2 (541 aa).

ATP is bound by residues 29–32, 86–90, glycine 413, and aspartate 492; these read TLGP and DGTTT.

The protein belongs to the chaperonin (HSP60) family. In terms of assembly, forms a cylinder of 14 subunits composed of two heptameric rings stacked back-to-back. Interacts with the co-chaperonin GroES.

It localises to the cytoplasm. It carries out the reaction ATP + H2O + a folded polypeptide = ADP + phosphate + an unfolded polypeptide.. Functionally, together with its co-chaperonin GroES, plays an essential role in assisting protein folding. The GroEL-GroES system forms a nano-cage that allows encapsulation of the non-native substrate proteins and provides a physical environment optimized to promote and accelerate protein folding. This is Chaperonin GroEL 2 from Nocardia farcinica (strain IFM 10152).